The chain runs to 738 residues: MYKSQYISGQREKFVRLDDIDSSSSPATGMMMQRNCFGFNLKNRGGEKKKASKSFREGVKKIRSEGLITIGKSVTRAVFPEDLRITEKKIFDPQDKTLLVWNRLFVISCILAVSVDPLFFYLPIVDNSGSSCIGIDTKLAVTTTTLRTIVDVFYLTRMALQFRTAYIAPSSRVFGRGELVIDPAKIAERYLTRYFVVDFLAVLPLPQIAVWKFLHGSKGSDVLPTKTALLNIVIVQYIPRFVRFIPLTSELKKTAGAFAEGAWAGAAYYLLWYMLASHITGAFWYMLSVERNDTCWRFACKVQPDPRLCVQILYCGTKFVSSGETEWIKTVPELLKSNCSAKADDSKFNYGIYGQAISSGIVSSTTFFSKFCYCLWWGLQNLSTLGQGLQTSTFPGEVLFSIAIAIAGLLLFALLIGNMQTYLQSLTVRLEEMRIKRRDSEQWMHHRSLPQNLRERVRRYDQYKWLETRGVDEENIVQSLPKDLRRDIKRHLCLNLVRRVPLFANMDERLLDAICERLKPSLFTESTYIVREGDPVNEMMFIIRGRLESVTTDGGRSGFFNRGLLKEGDFCGEELLTWALDPKAGSNLPSSTRTVKALTEVEAFALEAEELKFVASQFRRLHSRQVQQTFRFYSQQWRTWASCFIQAAWRRYSRRKNAELRRIEEKEEELGYEDEYDDESDKRPMVITRSESSSRLRSTIFASRFAANALKGHRLRSSESSKTLINLQKPPEPDFDAE.

Topologically, residues 1–104 (MYKSQYISGQ…DKTLLVWNRL (104 aa)) are cytoplasmic. Residues 105 to 125 (FVISCILAVSVDPLFFYLPIV) form a helical membrane-spanning segment. Over 126-139 (DNSGSSCIGIDTKL) the chain is Extracellular. A helical membrane pass occupies residues 140–160 (AVTTTTLRTIVDVFYLTRMAL). Over 161-193 (QFRTAYIAPSSRVFGRGELVIDPAKIAERYLTR) the chain is Cytoplasmic. The helical transmembrane segment at 194–214 (YFVVDFLAVLPLPQIAVWKFL) threads the bilayer. The Extracellular portion of the chain corresponds to 215–227 (HGSKGSDVLPTKT). The chain crosses the membrane as a helical span at residues 228–248 (ALLNIVIVQYIPRFVRFIPLT). At 249–268 (SELKKTAGAFAEGAWAGAAY) the chain is on the cytoplasmic side. A helical transmembrane segment spans residues 269-289 (YLLWYMLASHITGAFWYMLSV). The Extracellular segment spans residues 290-395 (ERNDTCWRFA…GQGLQTSTFP (106 aa)). The chain crosses the membrane as a helical span at residues 396-416 (GEVLFSIAIAIAGLLLFALLI). The Cytoplasmic segment spans residues 417 to 738 (GNMQTYLQSL…KPPEPDFDAE (322 aa)). A nucleoside 3',5'-cyclic phosphate-binding positions include 502 to 632 (LFAN…TFRF) and Glu573. Residues 618-633 (FRRLHSRQVQQTFRFY) are calmodulin-binding. The IQ domain occupies 638-667 (RTWASCFIQAAWRRYSRRKNAELRRIEEKE). Disordered regions lie at residues 671-693 (GYEDEYDDESDKRPMVITRSESS) and 715-738 (LRSSESSKTLINLQKPPEPDFDAE).

Belongs to the cyclic nucleotide-gated cation channel (TC 1.A.1.5) family. Homotetramer or heterotetramer.

It is found in the cell membrane. Its function is as follows. Putative cyclic nucleotide-gated ion channel. The chain is Putative cyclic nucleotide-gated ion channel 7 (CNGC7) from Arabidopsis thaliana (Mouse-ear cress).